The primary structure comprises 441 residues: D-aminoacyl-tRNA deacylase (441 aa).

Belongs to the DtdA deacylase family. Monomer. Zn(2+) serves as cofactor.

The enzyme catalyses a D-aminoacyl-tRNA + H2O = a tRNA + a D-alpha-amino acid + H(+). It catalyses the reaction glycyl-tRNA(Ala) + H2O = tRNA(Ala) + glycine + H(+). Its function is as follows. D-aminoacyl-tRNA deacylase with broad substrate specificity. By recycling D-aminoacyl-tRNA to D-amino acids and free tRNA molecules, this enzyme counteracts the toxicity associated with the formation of D-aminoacyl-tRNA entities in vivo. In Natronomonas pharaonis (strain ATCC 35678 / DSM 2160 / CIP 103997 / JCM 8858 / NBRC 14720 / NCIMB 2260 / Gabara) (Halobacterium pharaonis), this protein is D-aminoacyl-tRNA deacylase.